Reading from the N-terminus, the 159-residue chain is Cyclic pyranopterin monophosphate synthase (159 aa).

Residues 75–77 (LCH) and 113–114 (ME) contribute to the substrate site. Residue Asp-128 is part of the active site.

Belongs to the MoaC family. As to quaternary structure, homohexamer; trimer of dimers.

The catalysed reaction is (8S)-3',8-cyclo-7,8-dihydroguanosine 5'-triphosphate = cyclic pyranopterin phosphate + diphosphate. It functions in the pathway cofactor biosynthesis; molybdopterin biosynthesis. Catalyzes the conversion of (8S)-3',8-cyclo-7,8-dihydroguanosine 5'-triphosphate to cyclic pyranopterin monophosphate (cPMP). In Burkholderia multivorans (strain ATCC 17616 / 249), this protein is Cyclic pyranopterin monophosphate synthase.